The primary structure comprises 274 residues: MEALRQRIEAAFEARTDITPSTVDERVRSDVQHVINMLDKGELRVAEKIDGLWHVHQWLKKAVLLSFRIFDNAVIDGAETKYFDKVPLKFAEYDEARFKAEAIRVVPSATVRKGSFIGKNTVLMPSYVNLGAYVDEGTMVDTWATVGSCAQIGKNVHLSGGVGIGGVLEPLQAGPTIIEDNCFIGARSEIVEGVVVEEGSVISMGVYIGQSTRIYDRETGEVHYGRVPAGSVVVSGNLPSACGKYSLYAAIIVKKVDAKTRSKVGINELLRIVD.

Residues arginine 104 and aspartate 141 each coordinate substrate.

Belongs to the transferase hexapeptide repeat family. Homotrimer.

Its subcellular location is the cytoplasm. The enzyme catalyses (S)-2,3,4,5-tetrahydrodipicolinate + succinyl-CoA + H2O = (S)-2-succinylamino-6-oxoheptanedioate + CoA. Its pathway is amino-acid biosynthesis; L-lysine biosynthesis via DAP pathway; LL-2,6-diaminopimelate from (S)-tetrahydrodipicolinate (succinylase route): step 1/3. The polypeptide is 2,3,4,5-tetrahydropyridine-2,6-dicarboxylate N-succinyltransferase (Shewanella oneidensis (strain ATCC 700550 / JCM 31522 / CIP 106686 / LMG 19005 / NCIMB 14063 / MR-1)).